We begin with the raw amino-acid sequence, 418 residues long: Glutamyl-tRNA reductase (418 aa).

Residues Thr49 to Arg52, Ser109, Glu114 to Gln116, and Gln120 each bind substrate. Cys50 serves as the catalytic Nucleophile. Gly189 to Ile194 is a binding site for NADP(+).

Belongs to the glutamyl-tRNA reductase family. Homodimer.

The catalysed reaction is (S)-4-amino-5-oxopentanoate + tRNA(Glu) + NADP(+) = L-glutamyl-tRNA(Glu) + NADPH + H(+). It functions in the pathway porphyrin-containing compound metabolism; protoporphyrin-IX biosynthesis; 5-aminolevulinate from L-glutamyl-tRNA(Glu): step 1/2. Catalyzes the NADPH-dependent reduction of glutamyl-tRNA(Glu) to glutamate 1-semialdehyde (GSA). The sequence is that of Glutamyl-tRNA reductase from Salmonella choleraesuis (strain SC-B67).